We begin with the raw amino-acid sequence, 171 residues long: 3-hydroxydecanoyl-[acyl-carrier-protein] dehydratase (171 aa).

Residue His-71 is part of the active site.

The protein belongs to the thioester dehydratase family. FabA subfamily. As to quaternary structure, homodimer.

It localises to the cytoplasm. It catalyses the reaction a (3R)-hydroxyacyl-[ACP] = a (2E)-enoyl-[ACP] + H2O. It carries out the reaction (3R)-hydroxydecanoyl-[ACP] = (2E)-decenoyl-[ACP] + H2O. The enzyme catalyses (2E)-decenoyl-[ACP] = (3Z)-decenoyl-[ACP]. It functions in the pathway lipid metabolism; fatty acid biosynthesis. Necessary for the introduction of cis unsaturation into fatty acids. Catalyzes the dehydration of (3R)-3-hydroxydecanoyl-ACP to E-(2)-decenoyl-ACP and then its isomerization to Z-(3)-decenoyl-ACP. Can catalyze the dehydratase reaction for beta-hydroxyacyl-ACPs with saturated chain lengths up to 16:0, being most active on intermediate chain length. This is 3-hydroxydecanoyl-[acyl-carrier-protein] dehydratase from Agrobacterium fabrum (strain C58 / ATCC 33970) (Agrobacterium tumefaciens (strain C58)).